The chain runs to 337 residues: DNA-directed RNA polymerase subunit alpha (337 aa).

The tract at residues 1–232 is alpha N-terminal domain (alpha-NTD); that stretch reads MVREEVRVCT…IDLFIPFLHA (232 aa). Positions 266–337 are alpha C-terminal domain (alpha-CTD); the sequence is EISFQCIFID…FAIDLPKNKF (72 aa).

This sequence belongs to the RNA polymerase alpha chain family. In plastids the minimal PEP RNA polymerase catalytic core is composed of four subunits: alpha, beta, beta', and beta''. When a (nuclear-encoded) sigma factor is associated with the core the holoenzyme is formed, which can initiate transcription.

It localises to the plastid. Its subcellular location is the chloroplast. The enzyme catalyses RNA(n) + a ribonucleoside 5'-triphosphate = RNA(n+1) + diphosphate. Functionally, DNA-dependent RNA polymerase catalyzes the transcription of DNA into RNA using the four ribonucleoside triphosphates as substrates. The protein is DNA-directed RNA polymerase subunit alpha of Buxus microphylla (Littleleaf boxwood).